We begin with the raw amino-acid sequence, 131 residues long: Small ribosomal subunit protein uS8 (131 aa).

Belongs to the universal ribosomal protein uS8 family. In terms of assembly, part of the 30S ribosomal subunit. Contacts proteins S5 and S12.

In terms of biological role, one of the primary rRNA binding proteins, it binds directly to 16S rRNA central domain where it helps coordinate assembly of the platform of the 30S subunit. This is Small ribosomal subunit protein uS8 from Albidiferax ferrireducens (strain ATCC BAA-621 / DSM 15236 / T118) (Rhodoferax ferrireducens).